Consider the following 492-residue polypeptide: GTPase Der (492 aa).

EngA-type G domains are found at residues 3–166 and 205–378; these read PVVA…VDEV and IKLA…DSAT. GTP-binding positions include 9–16, 56–60, 118–121, 211–218, 258–262, and 323–326; these read GRPNVGKS, DTGGI, NKTD, DTAGV, and NKWD. A KH-like domain is found at 379–463; that stretch reads RRVSTAMLTR…PIRIQFKEGE (85 aa).

It belongs to the TRAFAC class TrmE-Era-EngA-EngB-Septin-like GTPase superfamily. EngA (Der) GTPase family. Associates with the 50S ribosomal subunit.

GTPase that plays an essential role in the late steps of ribosome biogenesis. The chain is GTPase Der from Klebsiella pneumoniae subsp. pneumoniae (strain ATCC 700721 / MGH 78578).